The following is a 495-amino-acid chain: Syntaphilin (495 aa).

The disordered stretch occupies residues 1–74; it reads MAMSLQGSRR…HGIKPPTPEQ (74 aa). Low complexity predominate over residues 7 to 49; the sequence is GSRRASAGSRRRTSPPVSVRDAYGTSSLSSSSNSGSCKGSDSS. Residues 79–161 adopt a coiled-coil conformation; that stretch reads LQQKEVCIRH…VKNNLIDKDK (83 aa). The disordered stretch occupies residues 191–244; the sequence is VAKEEGTGESAGGSPARSLTRSSTYTKLSDPAVCGDRQPGDPSNTSAEDGADSG. Ser-200 and Ser-204 each carry phosphoserine. Polar residues predominate over residues 207–217; it reads RSLTRSSTYTK. At Thr-214 the chain carries Phosphothreonine. A Phosphoserine modification is found at Ser-219. A Phosphothreonine modification is found at Thr-235. A helical transmembrane segment spans residues 427 to 446; it reads YIVDLLAVVVPAVPTVAWLC.

As to quaternary structure, binds to STX1A. Interacts with DNM1; this interaction inhibits the binding of DNM1 to AMPH and DNM1-receptor-mediated endocytosis.

It is found in the membrane. Its subcellular location is the synapse. The protein resides in the synaptosome. Its function is as follows. Inhibits SNARE complex formation by absorbing free STX1A. The chain is Syntaphilin from Mus musculus (Mouse).